Consider the following 171-residue polypeptide: Adenine phosphoribosyltransferase (171 aa).

The protein belongs to the purine/pyrimidine phosphoribosyltransferase family. In terms of assembly, homodimer.

The protein localises to the cytoplasm. The enzyme catalyses AMP + diphosphate = 5-phospho-alpha-D-ribose 1-diphosphate + adenine. The protein operates within purine metabolism; AMP biosynthesis via salvage pathway; AMP from adenine: step 1/1. Functionally, catalyzes a salvage reaction resulting in the formation of AMP, that is energically less costly than de novo synthesis. In Rhodospirillum centenum (strain ATCC 51521 / SW), this protein is Adenine phosphoribosyltransferase.